Reading from the N-terminus, the 295-residue chain is UDP-N-acetylenolpyruvoylglucosamine reductase (295 aa).

In terms of domain architecture, FAD-binding PCMH-type spans Lys23–Gly188. Residue Arg167 is part of the active site. The active-site Proton donor is Ser217. Residue Glu287 is part of the active site.

Belongs to the MurB family. FAD serves as cofactor.

It localises to the cytoplasm. It catalyses the reaction UDP-N-acetyl-alpha-D-muramate + NADP(+) = UDP-N-acetyl-3-O-(1-carboxyvinyl)-alpha-D-glucosamine + NADPH + H(+). It functions in the pathway cell wall biogenesis; peptidoglycan biosynthesis. Its function is as follows. Cell wall formation. This is UDP-N-acetylenolpyruvoylglucosamine reductase from Streptococcus pyogenes serotype M1.